Reading from the N-terminus, the 785-residue chain is Cullin-3 (785 aa).

One can recognise a Cullin neddylation domain in the interval 715-777 (SRKHQADACI…REYLQRQADN (63 aa)). Lys729 is covalently cross-linked (Glycyl lysine isopeptide (Lys-Gly) (interchain with G-Cter in NEDD8)).

Belongs to the cullin family. As to quaternary structure, probable component of multiple cullin-RING-based BC3B (BTB-CUL3-BTB) E3 ubiquitin-protein ligase complexes formed by cul-3, rbx-1 and a variable BTB domain-containing protein as adapter and substrate recognition component. Interacts with btb1, btb2, btb3, nedd8 and pip1. In terms of processing, neddylated; enhancing the ubiquitin-ligase activity.

It is found in the cytoplasm. It functions in the pathway protein modification; protein ubiquitination. Functionally, probable core component of multiple cullin-RING-based BC3B (BTB-CUL3-BTB) E3 ubiquitin-protein ligase complexes which mediate the ubiquitination and subsequent proteasomal degradation of target proteins. As a scaffold protein may contribute to catalysis through positioning of the substrate and the ubiquitin-conjugating enzyme. The functional specificity of the BC3B complex depends on the substrate recognition component. Involved in ubiquitin-mediated degradation of btb3. This is Cullin-3 (cul3) from Schizosaccharomyces pombe (strain 972 / ATCC 24843) (Fission yeast).